The sequence spans 298 residues: uncharacterized protein (298 aa).

The next 10 membrane-spanning stretches (helical) occupy residues 5–23 (ILVS…YFST), 33–52 (IFGY…VTLF), 72–91 (ALSY…LFLW), 101–120 (VSFG…RVFF), 127–145 (FKFI…NIVL), 149–166 (LSWE…YFSI), 175–194 (LASF…YFAL), 207–229 (FIWG…YVIA), 238–260 (LGLL…GEQI), and 265–284 (YPLF…DGVY). The EamA domain maps to 13 to 144 (FLFGYMYYFS…ATLGVISNIV (132 aa)).

This sequence belongs to the EamA transporter family.

Its subcellular location is the cell membrane. This is an uncharacterized protein from Haemophilus influenzae (strain ATCC 51907 / DSM 11121 / KW20 / Rd).